The following is a 92-amino-acid chain: Protein S100-A12 (92 aa).

EF-hand domains follow at residues 13–48 (NIFH…LKNT) and 49–84 (KDQG…VLIT). H16 provides a ligand contact to Cu cation. H16 serves as a coordination point for Zn(2+). Residues S19 and H24 each coordinate Ca(2+). Position 26 (D26) interacts with Cu cation. Zn(2+) is bound at residue D26. Positions 27 and 32 each coordinate Ca(2+). The tract at residues 38 to 53 (TKELPNTLKNTKDQGT) is hinge domain. Residues D62, N64, D66, Q68, and E73 each coordinate Ca(2+). Cu cation contacts are provided by H86 and H90. Residues H86 and H90 each contribute to the Zn(2+) site.

It belongs to the S-100 family. Homodimer. Homooligomer (tetramer or hexamer) in the presence of calcium, zinc and copper ions. Interacts with AGER and both calcium and zinc are essential for the interaction. Interacts with CACYBP in a calcium-dependent manner. Found essentially in granulocytes with small amounts found in lymphocytes.

The protein resides in the secreted. It is found in the cytoplasm. Its subcellular location is the cytoskeleton. It localises to the cell membrane. S100A12 is a calcium-, zinc- and copper-binding protein which plays a prominent role in the regulation of inflammatory processes and immune response. Its pro-inflammatory activity involves recruitment of leukocytes, promotion of cytokine and chemokine production, and regulation of leukocyte adhesion and migration. Acts as an alarmin or a danger associated molecular pattern (DAMP) molecule and stimulates innate immune cells via binding to receptor for advanced glycation endproducts (AGER). Binding to AGER activates the MAP-kinase and NF-kappa-B signaling pathways leading to production of pro-inflammatory cytokines and up-regulation of cell adhesion molecules ICAM1 and VCAM1. Acts as a monocyte and mast cell chemoattractant. Can stimulate mast cell degranulation and activation which generates chemokines, histamine and cytokines inducing further leukocyte recruitment to the sites of inflammation. Can inhibit the activity of matrix metalloproteinases; MMP2, MMP3 and MMP9 by chelating Zn(2+) from their active sites. In Sus scrofa (Pig), this protein is Protein S100-A12 (S100A12).